The sequence spans 446 residues: MKEIEKLKEEYPLLNKLIETEEVLWVNPNMEKYETAIKDSPLSEENVKDAKERLKRFASYIAKVFPETKETKGIIESPLLKIPSMKQALEKNYEQPILGELLLKCDSHLPISGSIKARGGIYEVLKHAEQLALQHGMLTEEDDYSILDSDTCREFFAKYSIAVGSTGNLGLSIGIMSAKLGFNVTVHMSADAKQWKKDLLRSKGVNVIEYEADYSKAVEEGRRQADADPSCYFVDDENSHDLFLGYAVAASRLQKQLEELEIIVDEEHPLFVYLPCGVGGGPGGVAFGLKLLYKDNVHCFFAEPTHSPCMLIGLMTGLHDKIAVQDIGIDNVTDADGLAVGRPSGFVGKTMEPFLSGDYTVSDEELYRLLKELADTENIYLEPSALAGMIGPVRVCKEDAYLQKQQLMEKVQKGTHIVWGTGGSMVPEDVMNGYYKTGEALTILEK.

N6-(pyridoxal phosphate)lysine is present on lysine 116.

The protein belongs to the serine/threonine dehydratase family. DsdA subfamily. Requires pyridoxal 5'-phosphate as cofactor.

The enzyme catalyses D-serine = pyruvate + NH4(+). The polypeptide is Probable D-serine dehydratase (Bacillus thuringiensis (strain Al Hakam)).